Reading from the N-terminus, the 287-residue chain is Elongation factor Ts (287 aa).

The tract at residues 80 to 83 (TDFL) is involved in Mg(2+) ion dislocation from EF-Tu.

Belongs to the EF-Ts family.

It is found in the cytoplasm. Associates with the EF-Tu.GDP complex and induces the exchange of GDP to GTP. It remains bound to the aminoacyl-tRNA.EF-Tu.GTP complex up to the GTP hydrolysis stage on the ribosome. This is Elongation factor Ts from Pseudomonas putida (strain ATCC 47054 / DSM 6125 / CFBP 8728 / NCIMB 11950 / KT2440).